The primary structure comprises 196 residues: GTP cyclohydrolase 1 (196 aa).

Cys84, His87, and Cys157 together coordinate Zn(2+).

This sequence belongs to the GTP cyclohydrolase I family. Toroid-shaped homodecamer, composed of two pentamers of five dimers.

It carries out the reaction GTP + H2O = 7,8-dihydroneopterin 3'-triphosphate + formate + H(+). It participates in cofactor biosynthesis; 7,8-dihydroneopterin triphosphate biosynthesis; 7,8-dihydroneopterin triphosphate from GTP: step 1/1. This is GTP cyclohydrolase 1 from Corynebacterium glutamicum (strain R).